The following is a 313-amino-acid chain: tRNA dimethylallyltransferase (313 aa).

Position 11–18 (11–18 (GPTACGKT)) interacts with ATP. 13–18 (TACGKT) provides a ligand contact to substrate. Interaction with substrate tRNA regions lie at residues 36-39 (DSAL), 160-164 (QRIGR), and 243-248 (RCVGYR).

This sequence belongs to the IPP transferase family. Monomer. Requires Mg(2+) as cofactor.

The catalysed reaction is adenosine(37) in tRNA + dimethylallyl diphosphate = N(6)-dimethylallyladenosine(37) in tRNA + diphosphate. Catalyzes the transfer of a dimethylallyl group onto the adenine at position 37 in tRNAs that read codons beginning with uridine, leading to the formation of N6-(dimethylallyl)adenosine (i(6)A). This chain is tRNA dimethylallyltransferase, found in Neisseria gonorrhoeae (strain ATCC 700825 / FA 1090).